Here is a 63-residue protein sequence, read N- to C-terminus: Ferredoxin (63 aa).

One can recognise a 4Fe-4S ferredoxin-type domain in the interval 2 to 29; it reads KVTVDQDLCIACGTCIDLCPSVFDWDDE. [4Fe-4S] cluster contacts are provided by Cys10, Cys13, Cys16, and Cys55.

Requires [4Fe-4S] cluster as cofactor.

Functionally, ferredoxins are iron-sulfur proteins that transfer electrons in a wide variety of metabolic reactions. The protein is Ferredoxin of Moorella thermoacetica (Clostridium thermoaceticum).